Here is a 542-residue protein sequence, read N- to C-terminus: Protein MGF 505-11L (542 aa).

This sequence belongs to the asfivirus MGF 505 family.

In terms of biological role, plays a role in virus cell tropism, and may be required for efficient virus replication in macrophages. In Ornithodoros (relapsing fever ticks), this protein is Protein MGF 505-11L.